Consider the following 159-residue polypeptide: LOB domain-containing protein 25 (159 aa).

The 102-residue stretch at 38 to 139 (SPCAACKFLR…RELEETNADL (102 aa)) folds into the LOB domain.

This sequence belongs to the LOB domain-containing protein family. In terms of tissue distribution, expressed in young shoots, roots, stems, leaves and flowers.

The protein is LOB domain-containing protein 25 (LBD25) of Arabidopsis thaliana (Mouse-ear cress).